Here is a 152-residue protein sequence, read N- to C-terminus: Male-specific protein scotti (152 aa).

This sequence belongs to the male-specific scotti family.

In terms of biological role, post-meiotically transcribed gene that has a role in late spermiogenesis; required for actin cone progression during spermatid individualization. The protein is Male-specific protein scotti of Drosophila mojavensis (Fruit fly).